Reading from the N-terminus, the 462-residue chain is Hemopexin (462 aa).

A signal peptide spans 1–23; sequence MARVLGAPVALGLWSLCWSLAIA. 2 O-linked (GalNAc...) threonine glycosylation sites follow: Thr24 and Thr29. The interval 29–48 is disordered; that stretch reads TSAHGNVAEGETKPDPDVTE. Residues 30–40 are O-glycosylated at one site; it reads SAHGNVAEGET. Basic and acidic residues predominate over residues 38–48; that stretch reads GETKPDPDVTE. Cystine bridges form between Cys50–Cys231, Cys149–Cys154, and Cys188–Cys200. 4 Hemopexin repeats span residues 53 to 93, 94 to 139, 140 to 184, and 185 to 231; these read GWSF…WKNF, PSPV…FPGI, PSPL…SWPA, and VGNC…FMPC. Asn64 is a glycosylation site (N-linked (GlcNAc...) (complex) asparagine). His79 is a binding site for heme. His150 serves as a coordination point for heme. An N-linked (GlcNAc...) (complex) asparagine glycan is attached at Asn187. Position 236 (His236) interacts with heme. Residues Asn240 and Asn246 are each glycosylated (N-linked (GlcNAc...) asparagine). Disulfide bonds link Cys257–Cys460, Cys366–Cys408, and Cys418–Cys435. Hemopexin repeat units follow at residues 259-304, 305-352, 357-396, and 400-450; these read PHLV…WPQG, PSAV…VGTP, LDSV…WTEL, and HEKV…ALPQ. Residue His293 coordinates heme. Residue Asn453 is glycosylated (N-linked (GlcNAc...) (complex) asparagine).

The protein belongs to the hemopexin family. In terms of assembly, interacts with FLVCR1. (Microbial infection) Interacts with hepatitis E virus/HEV protein ORF3. N- and O-glycosylated. O-glycosylated with core 1 or possibly core 8 glycans. O-glycosylation in the 30-40 region is minor compared to glycosylation at Thr-24 and Thr-29. Expressed by the liver and secreted in plasma.

It is found in the secreted. In terms of biological role, binds heme and transports it to the liver for breakdown and iron recovery, after which the free hemopexin returns to the circulation. The chain is Hemopexin (HPX) from Homo sapiens (Human).